A 511-amino-acid chain; its full sequence is Cytochrome P450 26B1 (511 aa).

Cys-440 is a heme binding site.

Belongs to the cytochrome P450 family. Heme is required as a cofactor.

The protein localises to the endoplasmic reticulum membrane. It localises to the microsome membrane. It catalyses the reaction all-trans-retinoate + reduced [NADPH--hemoprotein reductase] + O2 = all-trans-4-hydroxyretinoate + oxidized [NADPH--hemoprotein reductase] + H2O + H(+). The catalysed reaction is all-trans-retinoate + reduced [NADPH--hemoprotein reductase] + O2 = all-trans-18-hydroxyretinoate + oxidized [NADPH--hemoprotein reductase] + H2O + H(+). Functionally, a cytochrome P450 monooxygenase involved in the metabolism of retinoates (RAs), the active metabolites of vitamin A, and critical signaling molecules in animals. RAs exist as at least four different isomers: all-trans-RA (atRA), 9-cis-RA, 13-cis-RA, and 9,13-dicis-RA, where atRA is considered to be the biologically active isomer, although 9-cis-RA and 13-cis-RA also have activity. Catalyzes the hydroxylation of atRA primarily at C-4 and C-18, thereby contributing to the regulation of atRA homeostasis and signaling. Hydroxylation of atRA limits its biological activity and initiates a degradative process leading to its eventual elimination. Involved in the convertion of atRA to all-trans-4-oxo-RA. Can oxidize all-trans-13,14-dihydroretinoate (DRA) to metabolites which could include all-trans-4-oxo-DRA, all-trans-4-hydroxy-DRA, all-trans-5,8-epoxy-DRA, and all-trans-18-hydroxy-DRA. Plays a role in skeletal development, both at the level of patterning and in the ossification of bone and the establishment of some synovial joints. This chain is Cytochrome P450 26B1, found in Danio rerio (Zebrafish).